A 110-amino-acid chain; its full sequence is Ribonuclease P protein component 1 (110 aa).

This sequence belongs to the eukaryotic/archaeal RNase P protein component 1 family. As to quaternary structure, consists of a catalytic RNA component and at least 4-5 protein subunits.

Its subcellular location is the cytoplasm. The enzyme catalyses Endonucleolytic cleavage of RNA, removing 5'-extranucleotides from tRNA precursor.. Functionally, part of ribonuclease P, a protein complex that generates mature tRNA molecules by cleaving their 5'-ends. This chain is Ribonuclease P protein component 1, found in Methanosarcina mazei (strain ATCC BAA-159 / DSM 3647 / Goe1 / Go1 / JCM 11833 / OCM 88) (Methanosarcina frisia).